We begin with the raw amino-acid sequence, 380 residues long: Phospho-N-acetylmuramoyl-pentapeptide-transferase (380 aa).

Transmembrane regions (helical) follow at residues 26 to 46 (IVAAGLVSLLIGLLLGPLFIE), 75 to 95 (MGGALILLAVTVSTLLFADLG), 98 to 118 (LVWAALLVTLGYGVIGFWDDW), 135 to 155 (LVLQVLVVLAVYYGLLTDWQP), 160 to 180 (GFPFLTIGSLVDLHLTLPFVP), 183 to 203 (LFSPSLGWLYLPFMIFVVVAT), 222 to 242 (IVSSMTFLALSYVAGATIAGF), 259 to 279 (LGVFCSAIFGAGIAFLWYNTY), 283 to 303 (VFMGDVGSLALGGGLGMLAVL), 311 to 331 (AILHGVFLAETVSVILQVWSF), and 357 to 377 (KIIVRFWIMSIMLALVALMSL).

It belongs to the glycosyltransferase 4 family. MraY subfamily. It depends on Mg(2+) as a cofactor.

The protein resides in the cell inner membrane. The enzyme catalyses UDP-N-acetyl-alpha-D-muramoyl-L-alanyl-gamma-D-glutamyl-meso-2,6-diaminopimeloyl-D-alanyl-D-alanine + di-trans,octa-cis-undecaprenyl phosphate = di-trans,octa-cis-undecaprenyl diphospho-N-acetyl-alpha-D-muramoyl-L-alanyl-D-glutamyl-meso-2,6-diaminopimeloyl-D-alanyl-D-alanine + UMP. Its pathway is cell wall biogenesis; peptidoglycan biosynthesis. Its function is as follows. Catalyzes the initial step of the lipid cycle reactions in the biosynthesis of the cell wall peptidoglycan: transfers peptidoglycan precursor phospho-MurNAc-pentapeptide from UDP-MurNAc-pentapeptide onto the lipid carrier undecaprenyl phosphate, yielding undecaprenyl-pyrophosphoryl-MurNAc-pentapeptide, known as lipid I. In Anaeromyxobacter sp. (strain Fw109-5), this protein is Phospho-N-acetylmuramoyl-pentapeptide-transferase.